The following is a 164-amino-acid chain: MNIVDQQTFRDAMSCMGAAVNIITTDGPAGRAGFTASAVCSVTDTPPTLLVCLNRGASVWPVFNENRTLCVNTLSAGQEPLSNLFGGKTPMELRFAAARWQTGVTGCPQLEEALVSFDCRISQVVSVGTHDILFCAIEAIHRHATPYGLVWFDRSYHALMRPAC.

This sequence belongs to the non-flavoprotein flavin reductase family. RutF subfamily.

It carries out the reaction FMNH2 + NAD(+) = FMN + NADH + 2 H(+). In terms of biological role, catalyzes the reduction of FMN to FMNH2 which is used to reduce pyrimidine by RutA via the Rut pathway. In Escherichia coli O45:K1 (strain S88 / ExPEC), this protein is FMN reductase (NADH) RutF.